The chain runs to 344 residues: uncharacterized protein (344 aa).

The HTH araC/xylS-type domain occupies 242-343; that stretch reads RGITALVRSK…GVAPSEYSRR (102 aa). 2 consecutive DNA-binding regions (H-T-H motif) follow at residues 263–284 and 310–333; these read TDVAGELDMHPRTLRRRLAEEG and VQQVSTRLGYTEVSTFSHAFKRWY.

This is an uncharacterized protein from Mycobacterium bovis (strain ATCC BAA-935 / AF2122/97).